Here is a 273-residue protein sequence, read N- to C-terminus: Shikimate dehydrogenase (NADP(+)) (273 aa).

Residues 15–17 and threonine 62 contribute to the shikimate site; that span reads SKS. Residue lysine 66 is the Proton acceptor of the active site. Residue glutamate 78 coordinates NADP(+). Shikimate contacts are provided by asparagine 87 and aspartate 103. Residues 127–131, 151–156, and methionine 214 each bind NADP(+); these read GAGGA and NRTHDK. Tyrosine 216 lines the shikimate pocket. NADP(+) is bound at residue glycine 238.

Belongs to the shikimate dehydrogenase family. Homodimer.

It carries out the reaction shikimate + NADP(+) = 3-dehydroshikimate + NADPH + H(+). The protein operates within metabolic intermediate biosynthesis; chorismate biosynthesis; chorismate from D-erythrose 4-phosphate and phosphoenolpyruvate: step 4/7. Its function is as follows. Involved in the biosynthesis of the chorismate, which leads to the biosynthesis of aromatic amino acids. Catalyzes the reversible NADPH linked reduction of 3-dehydroshikimate (DHSA) to yield shikimate (SA). This is Shikimate dehydrogenase (NADP(+)) from Shewanella denitrificans (strain OS217 / ATCC BAA-1090 / DSM 15013).